Here is a 103-residue protein sequence, read N- to C-terminus: MNHPNTDHQSDTLLSDINTQPPKRYGVFLLNDDYTTMEFVVEILTEVFMLAQEQAVAVMLLVHHEGKGLCGTYTRDIAQTKQHQVMERAKTEGHPLKCIVEEV.

The protein belongs to the ClpS family. Binds to the N-terminal domain of the chaperone ClpA.

Functionally, involved in the modulation of the specificity of the ClpAP-mediated ATP-dependent protein degradation. The protein is ATP-dependent Clp protease adapter protein ClpS of Neisseria meningitidis serogroup A / serotype 4A (strain DSM 15465 / Z2491).